Consider the following 326-residue polypeptide: Nuclear egress protein 1 (326 aa).

The CCCH-type zinc-finger motif lies at 115–244 (CLSLSGMGYY…YAVFPTKSVH (130 aa)).

The protein belongs to the herpesviridae NEC1 protein family. Forms a heterohexameric complex with NEC2. Interacts with capsid vertex specific component 2/CVC2; this interaction directs the capsid to the host inner nuclear membrane to initiate budding. In terms of processing, phosphorylated at serine residues in the N-terminus. This phosphorylation regulates the localization within the inner nuclear membrane.

The protein resides in the host nucleus inner membrane. Functionally, plays an essential role in virion nuclear egress, the first step of virion release from infected cell. Within the host nucleus, NEC1 interacts with the newly formed capsid through the vertexes and directs it to the inner nuclear membrane by associating with NEC2. Induces the budding of the capsid at the inner nuclear membrane as well as its envelopment into the perinuclear space. There, the NEC1/NEC2 complex promotes the fusion of the enveloped capsid with the outer nuclear membrane and the subsequent release of the viral capsid into the cytoplasm where it will reach the secondary budding sites in the host Golgi or trans-Golgi network. The protein is Nuclear egress protein 1 of Equine herpesvirus 1 (strain Ab4p) (EHV-1).